Here is a 126-residue protein sequence, read N- to C-terminus: UPF0102 protein P9303_16141 (126 aa).

The protein belongs to the UPF0102 family.

The sequence is that of UPF0102 protein P9303_16141 from Prochlorococcus marinus (strain MIT 9303).